Reading from the N-terminus, the 4451-residue chain is Gramicidin S synthase 2 (4451 aa).

Residues 467–1044 form a domain 1 (proline-activating) region; it reads DKTIHQLFTE…IQEISNYING (578 aa). Carrier domains follow at residues 971–1046, 2006–2081, 3052–3127, and 4090–4165; these read VPTN…NGAK, APSS…ADGQ, RPRT…EETD, and APRN…THQE. 4 positions are modified to O-(pantetheine 4'-phosphoryl)serine: Ser1006, Ser2041, Ser3087, and Ser4125. Positions 1521–2080 are domain 2 (valine-activating); the sequence is DHVAVGWKDQ…SALAQYIADG (560 aa). A domain 3 (ornithine-activating) region spans residues 2538-3135; sequence YATNKIFHEL…TDTEQYMAIQ (598 aa). Residues 3591-4173 form a domain 4 (leucine-activating) region; the sequence is IQELFEEQVK…QESENNVHQP (583 aa).

The protein belongs to the ATP-dependent AMP-binding enzyme family. In terms of assembly, large multienzyme complex of GrsA and GrsB. Pantetheine 4'-phosphate serves as cofactor.

It functions in the pathway antibiotic biosynthesis; gramicidin S biosynthesis. In terms of biological role, this protein is a multifunctional enzyme, able to activate and polymerize the amino acids Pro, Val, Orn and Leu. Activation sites for these AA consist of individual domains. In Aneurinibacillus migulanus (Bacillus migulanus), this protein is Gramicidin S synthase 2 (grsB).